A 305-amino-acid chain; its full sequence is UDP-3-O-acyl-N-acetylglucosamine deacetylase (305 aa).

Zn(2+) contacts are provided by H79, H238, and D242. H265 (proton donor) is an active-site residue.

The protein belongs to the LpxC family. It depends on Zn(2+) as a cofactor.

The enzyme catalyses a UDP-3-O-[(3R)-3-hydroxyacyl]-N-acetyl-alpha-D-glucosamine + H2O = a UDP-3-O-[(3R)-3-hydroxyacyl]-alpha-D-glucosamine + acetate. Its pathway is glycolipid biosynthesis; lipid IV(A) biosynthesis; lipid IV(A) from (3R)-3-hydroxytetradecanoyl-[acyl-carrier-protein] and UDP-N-acetyl-alpha-D-glucosamine: step 2/6. Functionally, catalyzes the hydrolysis of UDP-3-O-myristoyl-N-acetylglucosamine to form UDP-3-O-myristoylglucosamine and acetate, the committed step in lipid A biosynthesis. In Shewanella woodyi (strain ATCC 51908 / MS32), this protein is UDP-3-O-acyl-N-acetylglucosamine deacetylase.